The following is a 479-amino-acid chain: Ribosomal RNA small subunit methyltransferase F (479 aa).

S-adenosyl-L-methionine is bound by residues 125-131 (AAAPGSK), Glu-149, Asp-176, and Asp-194. The active-site Nucleophile is Cys-247.

This sequence belongs to the class I-like SAM-binding methyltransferase superfamily. RsmB/NOP family.

The protein resides in the cytoplasm. It catalyses the reaction cytidine(1407) in 16S rRNA + S-adenosyl-L-methionine = 5-methylcytidine(1407) in 16S rRNA + S-adenosyl-L-homocysteine + H(+). Specifically methylates the cytosine at position 1407 (m5C1407) of 16S rRNA. The sequence is that of Ribosomal RNA small subunit methyltransferase F from Salmonella arizonae (strain ATCC BAA-731 / CDC346-86 / RSK2980).